We begin with the raw amino-acid sequence, 446 residues long: F-box/LRR-repeat protein At4g29420 (446 aa).

In terms of domain architecture, F-box spans methionine 1 to tyrosine 51. LRR repeat units lie at residues valine 59–valine 84, aspartate 103–aspartate 130, serine 135–asparagine 160, phenylalanine 181–glycine 206, cysteine 223–cysteine 248, histidine 265–serine 289, glutamine 318–proline 343, and asparagine 382–isoleucine 407.

The sequence is that of F-box/LRR-repeat protein At4g29420 from Arabidopsis thaliana (Mouse-ear cress).